The following is a 355-amino-acid chain: Methionine import ATP-binding protein MetN (355 aa).

The ABC transporter domain maps to 8-250 (LKNIDITFTQ…PQEDLTQEFI (243 aa)). 42 to 49 (GYSGAGKS) is a binding site for ATP.

This sequence belongs to the ABC transporter superfamily. Methionine importer (TC 3.A.1.24) family. In terms of assembly, the complex is composed of two ATP-binding proteins (MetN), two transmembrane proteins (MetI) and a solute-binding protein (MetQ).

The protein resides in the cell membrane. It catalyses the reaction L-methionine(out) + ATP + H2O = L-methionine(in) + ADP + phosphate + H(+). It carries out the reaction D-methionine(out) + ATP + H2O = D-methionine(in) + ADP + phosphate + H(+). Part of the ABC transporter complex MetNIQ involved in methionine import. Responsible for energy coupling to the transport system. The protein is Methionine import ATP-binding protein MetN of Streptococcus thermophilus (strain ATCC BAA-250 / LMG 18311).